The primary structure comprises 477 residues: MLPPGSNGTAYPGQFALYQQLAQGNAVGGSAGAPPLGPSQVVTACLLTLLIIWTLLGNVLVCAAIVRSRHLRANMTNVFIVSLAVSDLFVALLVMPWKAVAEVAGYWPFGAFCDVWVAFDIMCSTASILNLCVISVDRYWAISRPFRYKRKMTQRMALVMVGLAWTLSILISFIPVQLNWHRDQAASWGGLDLPNNLANWTPWEEDFWEPDVNAENCDSSLNRTYAISSSLISFYIPVAIMIVTYTRIYRIAQVQIRRISSLERAAEHAQSCRSSAACAPDTSLRASIKKETKVLKTLSVIMGVFVCCWLPFFILNCMVPFCSGHPEGPPAGFPCVSETTFDVFVWFGWANSSLNPVIYAFNADFQKVFAQLLGCSHFCSRTPVETVNISNELISYNQDIVFHKEIAAAYIHMMPNAVTPGNREVDNDEEEGPFDRMFQIYQTSPDGDPVAESVWELDCEGEISLDKITPFTPNGFH.

Topologically, residues 1–39 are extracellular; it reads MLPPGSNGTAYPGQFALYQQLAQGNAVGGSAGAPPLGPS. N-linked (GlcNAc...) asparagine glycosylation occurs at N7. A helical transmembrane segment spans residues 40–66; that stretch reads QVVTACLLTLLIIWTLLGNVLVCAAIV. Residues 67-77 are Cytoplasmic-facing; that stretch reads RSRHLRANMTN. Residues 78–104 traverse the membrane as a helical segment; that stretch reads VFIVSLAVSDLFVALLVMPWKAVAEVA. Over 105–114 the chain is Extracellular; it reads GYWPFGAFCD. A disulfide bridge connects residues C113 and C217. The chain crosses the membrane as a helical span at residues 115–136; it reads VWVAFDIMCSTASILNLCVISV. Residues 137 to 158 lie on the Cytoplasmic side of the membrane; that stretch reads DRYWAISRPFRYKRKMTQRMAL. Residues 159-180 traverse the membrane as a helical segment; that stretch reads VMVGLAWTLSILISFIPVQLNW. At 181–223 the chain is on the extracellular side; sequence HRDQAASWGGLDLPNNLANWTPWEEDFWEPDVNAENCDSSLNR. N222 is a glycosylation site (N-linked (GlcNAc...) asparagine). The helical transmembrane segment at 224-246 threads the bilayer; sequence TYAISSSLISFYIPVAIMIVTYT. Residues 247-296 lie on the Cytoplasmic side of the membrane; it reads RIYRIAQVQIRRISSLERAAEHAQSCRSSAACAPDTSLRASIKKETKVLK. Residues 297–320 form a helical membrane-spanning segment; it reads TLSVIMGVFVCCWLPFFILNCMVP. Residues 321–340 lie on the Extracellular side of the membrane; sequence FCSGHPEGPPAGFPCVSETT. A helical transmembrane segment spans residues 341–360; it reads FDVFVWFGWANSSLNPVIYA. Residues 361–477 are Cytoplasmic-facing; the sequence is FNADFQKVFA…ITPFTPNGFH (117 aa). C375 carries the S-palmitoyl cysteine lipid modification.

This sequence belongs to the G-protein coupled receptor 1 family. As to expression, neuron-specific, localized primarily within limbic regions of the brain.

It localises to the cell membrane. In terms of biological role, dopamine receptor whose activity is mediated by G proteins which activate adenylyl cyclase. The chain is D(1B) dopamine receptor (DRD5) from Homo sapiens (Human).